Here is a 3132-residue protein sequence, read N- to C-terminus: Toxin CdiA (3132 aa).

Positions 1–32 (MHQPPVRFTYRLLSYLVSAIIAGQPLLPAVGA) form a signal peptide, signal. Residues 36–322 (PQNGAGMDKA…AGGNLSVTGT (287 aa)) form a two-partner system transport domain (TPS) region. The tract at residues 351-1378 (GELTAGQNAM…ITMNTAHLLN (1028 aa)) is FHA-1. The interval 1379 to 1635 (SWDAISASHE…LSLSGASVSS (257 aa)) is receptor-binding domain (RBD). The interval 1636–1820 (YPLPSGNNGY…LSPEDITLHN (185 aa)) is YP domain. Positions 1821-1859 (GSVISGNNVQLAGGNITNSGSSINAQNDLLLDRTGSIDN) are periplasmic FHA-1 repeat (pFR). The FHA-2 stretch occupies residues 1930–2526 (RATDSLFMGA…QDSDRYDSRQ (597 aa)). 2 disordered regions span residues 2195-2228 (TGTG…STIG) and 2456-2497 (AGIN…SGAQ). Composition is skewed to polar residues over residues 2217–2228 (GTTQSQSASTIG) and 2483–2497 (VSLT…SGAQ). The pre-toxin (PT) domain stretch occupies residues 2862 to 2904 (DNLSEQERQQISMLATIASGIAGGLVGNSTSAAGTGAQAGRNS). Residues 2905-2908 (VENN) carry the VENN CT cleavage motif motif. A C-terminal effector domain (CT) region spans residues 2909–3121 (AMSGLEGFGT…IGTVTDYQIE (213 aa)).

It in the N-terminal section; belongs to the CdiA toxin family. As to quaternary structure, probably interacts with cognate immunity protein CdiI. In terms of processing, expressed as 303 kDa protein which can be processed to 284 kDa and 195 kDa forms.

It localises to the secreted. It is found in the target cell. The protein resides in the target cell cytoplasm. Its function is as follows. Toxic component of a toxin-immunity protein module, which functions as a cellular contact-dependent growth inhibition (CDI) system. CDI modules allow bacteria to communicate with and inhibit the growth of closely related neighboring bacteria (target cell counts decrease 1000- to 10(5)-fold) in a contact-dependent fashion. Inhibitory cells must be in logarithmic (not stationary) phase to inhibit growth of their targets, but protein synthesis is not necessary. The presence of P or S but not type 1 pili protects the target cells against growth inhibition for this CDI. BamA on the outer membrane of target cells acts as a receptor for CdiA, while target cell multidrug efflux pump AcrB facilitates its transport into the cytoplasm. Outer membrane receptor function is dependent on extracellular loops of BamA. Cells undergoing CDI show a 2- to 5-fold reversible decrease in aerobic respiration, proton motive force and steady-state ATP levels, suggesting this CT module is an ionophore that disrupts the target cell's inner cell membrane. Growth recovery requires an energy source. Cells expressing this protein in the absence of CdiI initially form filaments, some of which contain multiple nucleoids, while others are devoid of nucleoids. CDI cells induce the phage shock response, but pspA is not required for recovery from CDI. CDI is neutralized by its cognate immunity protein CdiI, but not by non-cognate CdiI from other bacteria with different CDI systems. Plays a role in biofilm formation, a region N-terminal to residue 644 is implicated in this receptor-independent cell adhesion. The CdiA protein is thought to be exported from the cell through the central lumen of CdiB, the other half of its two-partner system (TPS). The TPS domain probably remains associated with CdiB while the FHA-1 domain forms an extended filament (33 nm long) with the receptor-binding domain (RBD) at its extremity; in the secretion arrested state the C-terminus of the RBD and YP domains form a hairpin-like structure as the FHA-2, PT and CT domains are periplasmic. The YP domain is probably responsible for this arrest at the point where it re-enters the host cell periplasm. Upon binding to a target cell outer membrane receptor (BamA for this CDI) a signal is transmitted to activate secretion. The filament becomes about 5 nm longer, the rest of CdiA is secreted and the FHA-2 domain becomes stably associated with the target cell's outer membrane where it facilitates entry of the toxic CT domain into the target cell periplasm. From there the toxic CT domain is cleaved and gains access to the target cell cytoplasm via an inner membrane protein (multidrug efflux pump AcrB for this CDI). This chain is Toxin CdiA, found in Escherichia coli.